Here is a 261-residue protein sequence, read N- to C-terminus: Troponin T, slow skeletal muscle (261 aa).

The segment covering methionine 1–proline 30 has biased composition (acidic residues). Disordered regions lie at residues methionine 1–aspartate 61 and glutamate 108–valine 152. The residue at position 2 (serine 2) is a Phosphoserine; by CK2. Over residues valine 31–lysine 40 the composition is skewed to basic and acidic residues. The span at serine 42–isoleucine 54 shows a compositional bias: pro residues. The span at glutamate 108–lysine 148 shows a compositional bias: basic and acidic residues.

The protein belongs to the troponin T family. Interacts with TPM3. In terms of tissue distribution, expressed in soleus muscle. Isoform 4 is predominantly expressed in fast muscles.

Troponin T is the tropomyosin-binding subunit of troponin, the thin filament regulatory complex which confers calcium-sensitivity to striated muscle actomyosin ATPase activity. The chain is Troponin T, slow skeletal muscle (Tnnt1) from Rattus norvegicus (Rat).